Consider the following 1206-residue polypeptide: uncharacterized protein (1206 aa).

3 disordered regions span residues 133–547, 568–837, and 859–1206; these read YDLD…PVDY, FASS…DQLL, and RQRA…KATS. Pro residues-rich tracts occupy residues 139–151 and 159–234; these read IPPPPPGPAPGPP and GESP…PPAP. S255 carries the phosphoserine modification. Positions 305–319 are enriched in low complexity; the sequence is VRTSSIPVQEAPGAS. The segment covering 351-363 has biased composition (basic and acidic residues); the sequence is RALEPEQPREPRP. The segment covering 384–413 has biased composition (pro residues); the sequence is APPPAPPLPPPAPPLPPPAPSLPPAAPPLP. Residues 414-436 are compositionally biased toward low complexity; the sequence is STELAAPPSSGFMKTSKSNSPAL. Residues 454 to 467 show a composition bias toward basic and acidic residues; it reads VDWRDPRQMEKLRS. Over residues 522-531 the composition is skewed to low complexity; the sequence is PEKSPSSSSL. Basic and acidic residues predominate over residues 568–577; the sequence is FASSAEKEAK. A compositionally biased stretch (low complexity) spans 656-671; that stretch reads LPKATPGLTLPLKPTP. A Phosphothreonine modification is found at T680. Positions 732-747 are enriched in basic and acidic residues; sequence AEKDLASVRQREKPET. A compositionally biased stretch (pro residues) spans 1001–1016; sequence IPPPPEFSNDPEPPAP. The segment covering 1028-1041 has biased composition (polar residues); the sequence is PRNNFSDLGQSWGP. R1051, R1083, and R1094 each carry omega-N-methylarginine. Over residues 1170 to 1184 the composition is skewed to polar residues; sequence PHGNTHYGSPINTFT.

This is an uncharacterized protein from Mus musculus (Mouse).